The chain runs to 592 residues: MDSREENAVYDDMNLYIAPQSFIIEPNGGDELLVIGRHDKVTRVQPASGGLVANLRPTRRICGVLGTIHLLSCDYLLVATHRLFVGVLNGAVVWRLAGYDIIPYIPNSFQRKENENYLRLLRQTLDTKFFYFSYRYDLTNSLQRQREVAQSRPEVSGLLQRAEQRFVWNGYVLRQFNCDKMEKFQLPLVLGFVSINQVQINGQTFFWSIITRRSVQRAGTRLFCRGSDEQGHVANFVETEQIVEFNGQLTGFVQTRGSMPFHWHQLPNLRYKPRPVLVPGKDHLAACGLHFKEQIRLYGNNVAVNLVDHKGAEGELEATYARLVREMGNPQVRYESFDFHSECRKMRWDRLNILIDRLAHEQDQFGVYHVFDDGKLVSTQTGVFRTNCIDCLDRTNVVQSMLARRSLTAVLQKLGVLHVGQKVEHASDIFESIFKGVWADNADLVSLQYSGTCALKTDFTRTGKRTKSGAMQDGKNSLMRYYLNNFADGQRQDSIDLFLGKYLVNDNEGGAVPSPLESKHGWRFFTFPSVLLVAVAMFMITMTYPAEFNTENLLFMLFWGAMIAVSATGILHYGVEFVQWPRLFPPISFRDP.

Residues 1-523 (MDSREENAVY…SPLESKHGWR (523 aa)) are Cytoplasmic-facing. In terms of domain architecture, SAC spans 121 to 451 (LRQTLDTKFF…ADLVSLQYSG (331 aa)). Residues 524–544 (FFTFPSVLLVAVAMFMITMTY) form a helical membrane-spanning segment. The Lumenal portion of the chain corresponds to 545-552 (PAEFNTEN). Residues 553–573 (LLFMLFWGAMIAVSATGILHY) traverse the membrane as a helical segment. Residues 574–592 (GVEFVQWPRLFPPISFRDP) are Cytoplasmic-facing.

Its subcellular location is the endoplasmic reticulum membrane. It is found in the golgi apparatus membrane. The catalysed reaction is a 1,2-diacyl-sn-glycero-3-phospho-(1D-myo-inositol-3-phosphate) + H2O = a 1,2-diacyl-sn-glycero-3-phospho-(1D-myo-inositol) + phosphate. The enzyme catalyses a 1,2-diacyl-sn-glycero-3-phospho-(1D-myo-inositol 4-phosphate) + H2O = a 1,2-diacyl-sn-glycero-3-phospho-(1D-myo-inositol) + phosphate. Phosphoinositide phosphatase which catalyzes the hydrolysis of phosphatidylinositol 3-phosphate (PtdIns(3)P) and phosphatidylinositol 4-phosphate (PtdIns(4)P). Has low activity towards phosphatidylinositol-3,5-bisphosphate (PtdIns(3,5)P2). In Drosophila melanogaster (Fruit fly), this protein is Phosphatidylinositol-3-phosphatase SAC1 (Sac1).